The chain runs to 395 residues: ATP synthase subunit a (395 aa).

Helical transmembrane passes span 153 to 173 (FTNP…LVYF), 246 to 266 (HFLI…IVGF), 273 to 293 (FLSF…LVLL), 313 to 333 (MMAG…MLCM), and 339 to 359 (FIGD…ELGV).

It belongs to the ATPase A chain family. In terms of assembly, F-type ATPases have 2 components, CF(1) - the catalytic core - and CF(0) - the membrane proton channel. CF(1) has five subunits: alpha(3), beta(3), gamma(1), delta(1), epsilon(1). CF(0) has three main subunits: a, b and c.

The protein resides in the mitochondrion inner membrane. In terms of biological role, mitochondrial membrane ATP synthase (F(1)F(0) ATP synthase or Complex V) produces ATP from ADP in the presence of a proton gradient across the membrane which is generated by electron transport complexes of the respiratory chain. F-type ATPases consist of two structural domains, F(1) - containing the extramembraneous catalytic core and F(0) - containing the membrane proton channel, linked together by a central stalk and a peripheral stalk. During catalysis, ATP synthesis in the catalytic domain of F(1) is coupled via a rotary mechanism of the central stalk subunits to proton translocation. Key component of the proton channel; it may play a direct role in the translocation of protons across the membrane. This is ATP synthase subunit a (ATP6) from Nicotiana tabacum (Common tobacco).